A 160-amino-acid chain; its full sequence is Transcription antitermination protein NusB (160 aa).

It belongs to the NusB family.

Its function is as follows. Involved in transcription antitermination. Required for transcription of ribosomal RNA (rRNA) genes. Binds specifically to the boxA antiterminator sequence of the ribosomal RNA (rrn) operons. In Allorhizobium ampelinum (strain ATCC BAA-846 / DSM 112012 / S4) (Agrobacterium vitis (strain S4)), this protein is Transcription antitermination protein NusB.